A 783-amino-acid polypeptide reads, in one-letter code: Cation/H(+) antiporter 2 (783 aa).

The next 12 helical transmembrane spans lie at 19-39 (LNTM…FYLL), 43-63 (CGQA…PVLL), 81-101 (YYSF…GLEV), 121-141 (FVVS…LFGI), 145-165 (YFTF…PVVV), 186-206 (ALFI…FISG), 208-228 (IILE…INMV), 242-262 (YLSK…GITI), 300-320 (EFVL…IALT), 323-343 (FYLG…IGVI), 355-375 (YWLF…LLLD), and 391-411 (MMVA…SFLL).

The protein belongs to the monovalent cation:proton antiporter 2 (CPA2) transporter (TC 2.A.37) family. CHX (TC 2.A.37.4) subfamily. Specifically expressed in pollen.

The protein localises to the membrane. Functionally, may operate as a cation/H(+) antiporter. The protein is Cation/H(+) antiporter 2 (CHX2) of Arabidopsis thaliana (Mouse-ear cress).